Reading from the N-terminus, the 212-residue chain is Uridine kinase (212 aa).

13–20 is an ATP binding site; the sequence is GASASGKS.

This sequence belongs to the uridine kinase family.

The protein resides in the cytoplasm. The enzyme catalyses uridine + ATP = UMP + ADP + H(+). It carries out the reaction cytidine + ATP = CMP + ADP + H(+). It participates in pyrimidine metabolism; CTP biosynthesis via salvage pathway; CTP from cytidine: step 1/3. It functions in the pathway pyrimidine metabolism; UMP biosynthesis via salvage pathway; UMP from uridine: step 1/1. This chain is Uridine kinase, found in Shewanella amazonensis (strain ATCC BAA-1098 / SB2B).